The primary structure comprises 161 residues: Hydrogenase expression/formation protein HoxO (161 aa).

This sequence belongs to the HupG/HyaE family.

This Cupriavidus necator (strain ATCC 17699 / DSM 428 / KCTC 22496 / NCIMB 10442 / H16 / Stanier 337) (Ralstonia eutropha) protein is Hydrogenase expression/formation protein HoxO (hoxO).